A 347-amino-acid chain; its full sequence is Probable dual-specificity RNA methyltransferase RlmN (347 aa).

The Proton acceptor role is filled by glutamate 93. In terms of domain architecture, Radical SAM core spans 99 to 333 (TEKRLTACLS…VSLRKSRGLD (235 aa)). A disulfide bridge connects residues cysteine 106 and cysteine 338. [4Fe-4S] cluster is bound by residues cysteine 113, cysteine 117, and cysteine 120. Residues 160–161 (GE), serine 190, 219–221 (SLH), and asparagine 295 contribute to the S-adenosyl-L-methionine site. Cysteine 338 serves as the catalytic S-methylcysteine intermediate.

The protein belongs to the radical SAM superfamily. RlmN family. It depends on [4Fe-4S] cluster as a cofactor.

It is found in the cytoplasm. It catalyses the reaction adenosine(2503) in 23S rRNA + 2 reduced [2Fe-2S]-[ferredoxin] + 2 S-adenosyl-L-methionine = 2-methyladenosine(2503) in 23S rRNA + 5'-deoxyadenosine + L-methionine + 2 oxidized [2Fe-2S]-[ferredoxin] + S-adenosyl-L-homocysteine. It carries out the reaction adenosine(37) in tRNA + 2 reduced [2Fe-2S]-[ferredoxin] + 2 S-adenosyl-L-methionine = 2-methyladenosine(37) in tRNA + 5'-deoxyadenosine + L-methionine + 2 oxidized [2Fe-2S]-[ferredoxin] + S-adenosyl-L-homocysteine. In terms of biological role, specifically methylates position 2 of adenine 2503 in 23S rRNA and position 2 of adenine 37 in tRNAs. This chain is Probable dual-specificity RNA methyltransferase RlmN, found in Prochlorococcus marinus (strain MIT 9301).